Here is a 727-residue protein sequence, read N- to C-terminus: Sodium-dependent neutral amino acid transporter SLC6A17 (727 aa).

Residues Met1–Tyr69 are Cytoplasmic-facing. Phosphoserine occurs at positions 13 and 20. The chain crosses the membrane as a helical span at residues Ile70 to Cys90. At Gln91–Gly95 the chain is on the extracellular side. A helical transmembrane segment spans residues Gly96–Leu116. At Glu117–Cys147 the chain is on the cytoplasmic side. The chain crosses the membrane as a helical span at residues Ile148–Phe168. The Extracellular portion of the chain corresponds to Phe169 to Gly222. N-linked (GlcNAc...) asparagine glycosylation occurs at Asn186. A helical transmembrane segment spans residues Leu223–Val243. At Lys244–Met253 the chain is on the cytoplasmic side. Residues Tyr254–Leu274 traverse the membrane as a helical segment. Over Arg275 to Glu300 the chain is Extracellular. The helical transmembrane segment at Ala301–Ser321 threads the bilayer. The Cytoplasmic segment spans residues Tyr322–Ala334. Residues Leu335–Leu355 form a helical membrane-spanning segment. The Extracellular segment spans residues Gly356–Val460. Position 377 is a phosphotyrosine (Tyr377). Asn393 carries N-linked (GlcNAc...) asparagine glycosylation. Residues Met461–Ile481 form a helical membrane-spanning segment. At Thr482–Lys490 the chain is on the cytoplasmic side. A helical membrane pass occupies residues Val491–Phe511. Residues Val512 to Ser527 are Extracellular-facing. The helical transmembrane segment at Ala528 to Gly548 threads the bilayer. Topologically, residues Thr549–Lys573 are cytoplasmic. Residues Phe574–Thr594 form a helical membrane-spanning segment. The Extracellular portion of the chain corresponds to Pro595 to Ala617. A helical transmembrane segment spans residues Met618–Leu638. Over Arg639 to Leu727 the chain is Cytoplasmic. Phosphoserine is present on residues Ser665 and Ser701. Residues Val680–Leu727 form a disordered region. The segment covering Gly698–Pro709 has biased composition (polar residues).

It belongs to the sodium:neurotransmitter symporter (SNF) (TC 2.A.22) family.

It localises to the cytoplasmic vesicle. The protein localises to the secretory vesicle. The protein resides in the synaptic vesicle membrane. It is found in the postsynapse. Its subcellular location is the presynapse. The catalysed reaction is L-proline(in) + Na(+)(in) = L-proline(out) + Na(+)(out). The enzyme catalyses L-leucine(in) + Na(+)(in) = L-leucine(out) + Na(+)(out). It carries out the reaction glycine(in) + Na(+)(in) = glycine(out) + Na(+)(out). It catalyses the reaction L-alanine(in) + Na(+)(in) = L-alanine(out) + Na(+)(out). The catalysed reaction is L-glutamine(in) + Na(+)(in) = L-glutamine(out) + Na(+)(out). In terms of biological role, synaptic vesicle transporter with apparent selectivity for neutral amino acids. The transport is sodium-coupled but chloride-independent, likely driven by the proton electrochemical gradient generated by vacuolar H(+)-ATPase in an overall electrogenic mechanism. May contribute to the synaptic uptake of neurotransmitter precursors in a process coupled in part to vesicle exocytosis. The sequence is that of Sodium-dependent neutral amino acid transporter SLC6A17 from Homo sapiens (Human).